The primary structure comprises 216 residues: Protein Syd (216 aa).

Belongs to the Syd family.

It localises to the cell inner membrane. Functionally, interacts with the SecY protein in vivo. May bind preferentially to an uncomplexed state of SecY, thus functioning either as a chelating agent for excess SecY in the cell or as a regulatory factor that negatively controls the translocase function. In Shewanella frigidimarina (strain NCIMB 400), this protein is Protein Syd.